Here is a 225-residue protein sequence, read N- to C-terminus: NAD(P)H-quinone oxidoreductase subunit K, chloroplastic (225 aa).

[4Fe-4S] cluster is bound by residues Cys43, Cys44, Cys108, and Cys139.

Belongs to the complex I 20 kDa subunit family. As to quaternary structure, NDH is composed of at least 16 different subunits, 5 of which are encoded in the nucleus. It depends on [4Fe-4S] cluster as a cofactor.

Its subcellular location is the plastid. The protein resides in the chloroplast thylakoid membrane. It catalyses the reaction a plastoquinone + NADH + (n+1) H(+)(in) = a plastoquinol + NAD(+) + n H(+)(out). It carries out the reaction a plastoquinone + NADPH + (n+1) H(+)(in) = a plastoquinol + NADP(+) + n H(+)(out). NDH shuttles electrons from NAD(P)H:plastoquinone, via FMN and iron-sulfur (Fe-S) centers, to quinones in the photosynthetic chain and possibly in a chloroplast respiratory chain. The immediate electron acceptor for the enzyme in this species is believed to be plastoquinone. Couples the redox reaction to proton translocation, and thus conserves the redox energy in a proton gradient. The chain is NAD(P)H-quinone oxidoreductase subunit K, chloroplastic from Carica papaya (Papaya).